The following is a 669-amino-acid chain: DNA ligase (669 aa).

NAD(+) is bound by residues 34 to 38 (DAEYD), 83 to 84 (SL), and E114. The active-site N6-AMP-lysine intermediate is the K116. 4 residues coordinate NAD(+): R137, E171, K287, and K311. Residues C405, C408, C423, and C428 each coordinate Zn(2+). The BRCT domain occupies 591-669 (NVESYFAGKT…EERFLQELNK (79 aa)).

This sequence belongs to the NAD-dependent DNA ligase family. LigA subfamily. It depends on Mg(2+) as a cofactor. Mn(2+) serves as cofactor.

The enzyme catalyses NAD(+) + (deoxyribonucleotide)n-3'-hydroxyl + 5'-phospho-(deoxyribonucleotide)m = (deoxyribonucleotide)n+m + AMP + beta-nicotinamide D-nucleotide.. Its function is as follows. DNA ligase that catalyzes the formation of phosphodiester linkages between 5'-phosphoryl and 3'-hydroxyl groups in double-stranded DNA using NAD as a coenzyme and as the energy source for the reaction. It is essential for DNA replication and repair of damaged DNA. The protein is DNA ligase of Bacillus cereus (strain B4264).